The chain runs to 226 residues: Late protein I226R (226 aa).

Residues 1-16 (MKMETFLVCLFHNAAG) form the signal peptide. An N-linked (GlcNAc...) asparagine; by host glycan is attached at N164.

It belongs to the asfivirus I226R family.

In terms of biological role, plays a role in the inhibition of host NF-kappa-B and IRF3 signaling pathways. Mechanistically, promotes the degradation of host IKBKG through enhancing its ubiquitination leading to inhibition of both pathways. The sequence is that of Late protein I226R from African swine fever virus (isolate Pig/Kenya/KEN-50/1950) (ASFV).